We begin with the raw amino-acid sequence, 168 residues long: GTP-dependent dephospho-CoA kinase (168 aa).

Residues Asp49, Val50, Val51, Asp68, Lys70, and Glu120 each coordinate GTP.

This sequence belongs to the GTP-dependent DPCK family.

It catalyses the reaction 3'-dephospho-CoA + GTP = GDP + CoA + H(+). Its pathway is cofactor biosynthesis; coenzyme A biosynthesis. Functionally, catalyzes the GTP-dependent phosphorylation of the 3'-hydroxyl group of dephosphocoenzyme A to form coenzyme A (CoA). This is GTP-dependent dephospho-CoA kinase from Pyrobaculum calidifontis (strain DSM 21063 / JCM 11548 / VA1).